A 220-amino-acid polypeptide reads, in one-letter code: Uracil-DNA glycosylase (220 aa).

Asp-65 acts as the Proton acceptor in catalysis.

It belongs to the uracil-DNA glycosylase (UDG) superfamily. UNG family.

It localises to the cytoplasm. The catalysed reaction is Hydrolyzes single-stranded DNA or mismatched double-stranded DNA and polynucleotides, releasing free uracil.. Its function is as follows. Excises uracil residues from the DNA which can arise as a result of misincorporation of dUMP residues by DNA polymerase or due to deamination of cytosine. This is Uracil-DNA glycosylase from Bacteroides thetaiotaomicron (strain ATCC 29148 / DSM 2079 / JCM 5827 / CCUG 10774 / NCTC 10582 / VPI-5482 / E50).